The following is a 137-amino-acid chain: Nucleoside diphosphate kinase (137 aa).

ATP contacts are provided by Lys-10, Phe-58, Arg-86, Thr-92, Arg-103, and Asn-113. The active-site Pros-phosphohistidine intermediate is His-116.

This sequence belongs to the NDK family. As to quaternary structure, homotetramer. Requires Mg(2+) as cofactor.

It localises to the cytoplasm. It catalyses the reaction a 2'-deoxyribonucleoside 5'-diphosphate + ATP = a 2'-deoxyribonucleoside 5'-triphosphate + ADP. It carries out the reaction a ribonucleoside 5'-diphosphate + ATP = a ribonucleoside 5'-triphosphate + ADP. In terms of biological role, major role in the synthesis of nucleoside triphosphates other than ATP. The ATP gamma phosphate is transferred to the NDP beta phosphate via a ping-pong mechanism, using a phosphorylated active-site intermediate. This Helicobacter pylori (strain Shi470) protein is Nucleoside diphosphate kinase.